The primary structure comprises 311 residues: Methionyl-tRNA formyltransferase (311 aa).

Position 110-113 (110-113) interacts with (6S)-5,6,7,8-tetrahydrofolate; that stretch reads SLLP.

The protein belongs to the Fmt family.

It catalyses the reaction L-methionyl-tRNA(fMet) + (6R)-10-formyltetrahydrofolate = N-formyl-L-methionyl-tRNA(fMet) + (6S)-5,6,7,8-tetrahydrofolate + H(+). Attaches a formyl group to the free amino group of methionyl-tRNA(fMet). The formyl group appears to play a dual role in the initiator identity of N-formylmethionyl-tRNA by promoting its recognition by IF2 and preventing the misappropriation of this tRNA by the elongation apparatus. In Streptococcus pneumoniae serotype 2 (strain D39 / NCTC 7466), this protein is Methionyl-tRNA formyltransferase.